The following is a 1193-amino-acid chain: Dynamin-like protein A (1193 aa).

The segment at Met1 to Glu609 is D1, associates with and fuses membranes, tethers lipsomes. The interval Gly50–Ser57 is G1 motif D1. A G2 motif D1 region spans residues Thr76–Ala78. The interval Asp141–Gly144 is G3 motif D1. The segment at Asn199 to Asp202 is G4 motif D1. The D2, does not associate with membranes stretch occupies residues Met561 to Met1193. The interval Gly619 to Ser626 is G1 motif D2. The interval Thr645–Ala647 is G2 motif D2. The tract at residues Asp774–Gly777 is G3 motif D2. Residues Asn837–Asp840 form a G4 motif D2 region.

The protein belongs to the TRAFAC class dynamin-like GTPase superfamily. Dynamin/Fzo/YdjA family. Homodimer in solution. Both D1 and D2 domains interact with YwpG, YneK interacts only with D1 while RNase Y (rny) only interacts with whole protein. Probably oligomerizes at damaged membrane sites. Mg(2+) is required as a cofactor.

The protein localises to the cell membrane. The catalysed reaction is GTP + H2O = GDP + phosphate + H(+). In terms of biological role, mediates lipid mixing of vesicles and full mixing of their contents in the absence and presence of GTP. Tethers and mixes small vesicles better than larger ones, indicating a curvature preference. GTP slows down DynA-mediated lipid fusion, perhaps controlling its activity. Prefers phospholipid composition close to the B.subtilis membrane; requires phosphatidylglycerol for fusion has no activity on pure phosphatidylethanolamine vesicles. Regulates membrane lipid diffusion. Required to prevent membrane damage when exposed to low levels of membrane-damaging antibiotics or to bacteriophage. Probably surveys the cell membrane for stress; localizes to sites of membrane damage (treatment with nisin) and forms foci in cells treated with pore-forming compounds (CCCP). May assist membrane repair, possibly by membrane tethering and fusion. Probably functions both in early and late cell division, affects the proper formation of the FtsZ ring. Plays a non-redundant role with flottilin (floT) in membrane dynamics and cell shape. Probably able to bend membranes. Tethers liposomes and mediates their fusion; this does not require GTPase activity or the presence of GTP. Both GTPase domains (dynamin-type G) are required for GTPase activity. Functionally, has intrinsic affinity for membranes and membrane distortion capability; causes tubulation and membrane distortion when expressed in a Drosophila cell line. The chain is Dynamin-like protein A from Bacillus subtilis (strain 168).